Consider the following 169-residue polypeptide: Nucleoside-triphosphatase THEP1 (169 aa).

Residues 11-18 (GEPGVGKT) and 100-107 (IIGIDEIG) each bind ATP.

Belongs to the THEP1 NTPase family.

It catalyses the reaction a ribonucleoside 5'-triphosphate + H2O = a ribonucleoside 5'-diphosphate + phosphate + H(+). Functionally, has nucleotide phosphatase activity towards ATP, GTP, CTP, TTP and UTP. May hydrolyze nucleoside diphosphates with lower efficiency. This chain is Nucleoside-triphosphatase THEP1, found in Sulfurisphaera tokodaii (strain DSM 16993 / JCM 10545 / NBRC 100140 / 7) (Sulfolobus tokodaii).